We begin with the raw amino-acid sequence, 251 residues long: 3-deoxy-manno-octulosonate cytidylyltransferase (251 aa).

This sequence belongs to the KdsB family.

It localises to the cytoplasm. The enzyme catalyses 3-deoxy-alpha-D-manno-oct-2-ulosonate + CTP = CMP-3-deoxy-beta-D-manno-octulosonate + diphosphate. Its pathway is nucleotide-sugar biosynthesis; CMP-3-deoxy-D-manno-octulosonate biosynthesis; CMP-3-deoxy-D-manno-octulosonate from 3-deoxy-D-manno-octulosonate and CTP: step 1/1. The protein operates within bacterial outer membrane biogenesis; lipopolysaccharide biosynthesis. Functionally, activates KDO (a required 8-carbon sugar) for incorporation into bacterial lipopolysaccharide in Gram-negative bacteria. The sequence is that of 3-deoxy-manno-octulosonate cytidylyltransferase from Agrobacterium fabrum (strain C58 / ATCC 33970) (Agrobacterium tumefaciens (strain C58)).